The chain runs to 269 residues: Histone deacetylase HDT1 (269 aa).

The tract at residues 97 to 269 (PFEEEEDDED…HSKAKHSAGK (173 aa)) is disordered. Acidic residues-rich tracts occupy residues 98 to 115 (FEEE…DEDI) and 153 to 179 (KDDE…DSEE). Polar residues predominate over residues 228–238 (PSKQASKTPKS). The C2H2-type zinc-finger motif lies at 242-265 (HHCKPCNRSFGSEGALDSHSKAKH).

Belongs to the histone deacetylase HD2 family. Predominantly expressed in ovaries. Accumulates predominantly in the micropylar region of the ovule's integument.

The protein localises to the nucleus. The protein resides in the nucleolus. In terms of biological role, mediates the deacetylation of lysine residues on the N-terminal part of the core histones (H2A, H2B, H3 and H4). Histone deacetylation gives a tag for epigenetic repression and plays an important role in transcriptional regulation, cell cycle progression and developmental events. This chain is Histone deacetylase HDT1 (HDT1), found in Solanum chacoense (Chaco potato).